The following is a 508-amino-acid chain: WD repeat-containing protein JIP5 (508 aa).

WD repeat units follow at residues 46–94 (LATG…GVET), 105–144 (RHKG…VVKK), 150–189 (GQNV…QTNL), 194–234 (HNGD…EGDF), 252–293 (DQED…LADQ), and 344–381 (SKLD…QLTP). The interval 372-508 (DSEKSEQLTP…THGIRRFEGL (137 aa)) is disordered. The segment covering 491 to 508 (IKPERSMKTHGIRRFEGL) has biased composition (basic and acidic residues).

It belongs to the WD repeat WDR55 family.

Its subcellular location is the nucleus. The protein resides in the nucleolus. The polypeptide is WD repeat-containing protein JIP5 (JIP5) (Eremothecium gossypii (strain ATCC 10895 / CBS 109.51 / FGSC 9923 / NRRL Y-1056) (Yeast)).